The primary structure comprises 548 residues: LDL receptor repeat-containing protein egg-2 (548 aa).

Residues 1–49 (MSQQAGNAQRGRFDEEPMSLGEKISHRMDQLKEIVSSSCPCAGKFPPVA) are Cytoplasmic-facing. The helical; Signal-anchor for type II membrane protein transmembrane segment at 50-70 (IVLIVALIILGVIIAVPLVIF) threads the bilayer. Residues 71-548 (LSPSAQAMSS…LALKNSGLRP (478 aa)) are Extracellular-facing. N-linked (GlcNAc...) asparagine glycosylation is present at Asn-119. 8 LDL-receptor class A domains span residues 122 to 160 (TCSG…ENCK), 161 to 213 (ECQS…ASCR), 215 to 252 (KCSK…SNCN), 253 to 288 (KCQK…HQCD), 291 to 328 (TCSG…ENCP), 370 to 412 (KCDP…KKCT), 416 to 454 (ECVV…KGCD), and 455 to 492 (KCPS…HKCS). 23 disulfide bridges follow: Cys-130-Cys-150, Cys-144-Cys-159, Cys-162-Cys-190, Cys-168-Cys-203, Cys-197-Cys-212, Cys-216-Cys-229, Cys-223-Cys-242, Cys-236-Cys-251, Cys-254-Cys-265, Cys-261-Cys-278, Cys-272-Cys-287, Cys-292-Cys-305, Cys-300-Cys-318, Cys-312-Cys-327, Cys-371-Cys-389, Cys-379-Cys-402, Cys-396-Cys-411, Cys-417-Cys-431, Cys-427-Cys-444, Cys-438-Cys-453, Cys-456-Cys-469, Cys-463-Cys-482, and Cys-476-Cys-491. A glycan (N-linked (GlcNAc...) asparagine) is linked at Asn-244. Asn-527 carries an N-linked (GlcNAc...) asparagine glycan.

It is found in the cell membrane. The protein resides in the endosome membrane. Its function is as follows. Probable receptor which is required for the oocyte-to-zygote transition although its exact function is controversial. Redundantly with egg-1, seems to be required for fertilization probably by promoting the interaction or fusion between sperm and oocyte. Conversely, shown to be dispensable for fertilization but required together with egg-1 for the formation of a continuous and cohesive eggshell chitin layer by maintaining a homogenous distribution of chitin synthase chs-1 at the unfertilized oocyte cell membrane. Appears to recruit or maintain together to the unfertilized oocyte cortex several proteins including chs-1, kinase mbk-2 and pseudophosphatase egg-3, and possibly egg-4 and egg-5. This chain is LDL receptor repeat-containing protein egg-2, found in Caenorhabditis elegans.